Reading from the N-terminus, the 427-residue chain is Inward rectifier potassium channel 2 (427 aa).

At 1–81 (MGSVRTNRYS…IFTTCVDIRW (81 aa)) the chain is on the cytoplasmic side. The chain crosses the membrane as a helical span at residues 82-106 (RWMLVIFCLTFILSWLFFGCVFWLI). Residues 107–128 (ALLHGDLENQENNKPCVSQVSS) lie on the Extracellular side of the membrane. The segment at residues 129–140 (FTAAFLFSIETQ) is an intramembrane region (helical; Pore-forming). Residues 141–147 (TTIGYGF) constitute an intramembrane region (pore-forming). Residues 142-147 (TIGYGF) carry the Selectivity filter motif. Topologically, residues 148-156 (RCVTDECPI) are extracellular. A helical membrane pass occupies residues 157 to 178 (AVFMVVFQSIVGCIIDAFIIGA). Topologically, residues 179-427 (VMAKMAKPKK…PRPLRRESEI (249 aa)) are cytoplasmic. Positions 181-208 (AKMAKPKKRNETLVFSHNAVVAMRDGKL) are polyphosphoinositide (PIP2)-binding. Residues 386–427 (EEDEIDTGVPESTSTDTHPDMDHHNQAGVPLEPRPLRRESEI) form a disordered region. Residues 425 to 427 (SEI) carry the PDZ-binding motif.

It belongs to the inward rectifier-type potassium channel (TC 1.A.2.1) family. KCNJ2 subfamily. As to quaternary structure, homotetramer. Homomultimeric and heteromultimeric association with KCNJ4/Kir2.3, resulting in an enhanced G-protein-induced current. Associates, via its PDZ-recognition domain, with a complex containing LIN7A, LIN7B, LIN7C, DLG1, CASK and APBA1. As to expression, found in the apical basilar papilla of the inner ear, brain, muscle, cerebellum, heart and liver.

It is found in the cell membrane. The protein resides in the sarcolemma. It localises to the T-tubule. It carries out the reaction K(+)(in) = K(+)(out). Activated by phosphatidylinositol 4,5 biphosphate (PtdIns(4,5)P2). Inward rectifier potassium channels are characterized by a greater tendency to allow potassium to flow into the cell rather than out of it. Their voltage dependence is regulated by the concentration of extracellular potassium; as external potassium is raised, the voltage range of the channel opening shifts to more positive voltages. The inward rectification is mainly due to the blockage of outward current by internal magnesium. Can be blocked by external barium. Probably participates in establishing action potential waveform and excitability of neuronal and muscle tissues. This Gallus gallus (Chicken) protein is Inward rectifier potassium channel 2 (KCNJ2).